The primary structure comprises 333 residues: Minor fimbrium tip subunit MfA4 (333 aa).

Positions 1-18 are cleaved as a signal peptide; the sequence is MKKYLLYASLLTSVLLFS. Cys19 carries the N-palmitoyl cysteine lipid modification. Cys19 carries S-diacylglycerol cysteine lipidation. A propeptide spanning residues 19-53 is cleaved from the precursor; sequence CSKNNPSEPVEDRSIEISIRVDDFTKTGETVRYER.

The protein belongs to the bacteroidetes fimbrillin superfamily. FimA/Mfa1 family. In terms of assembly, component of the fimbrium tip. Minor fimbriae are composed of a structural subunit, most often Mfa1, and the accessory subunits Mfa3, Mfa4 and Mfa5. Mfa4 is required for Mfa3 and Mfa5 insertion into the fimbrium. Fimbrium assembly occurs by linear, head-to-tail oligomerization of fimbrial subunits. This is mediated via insertion of a C-terminal beta-strand from one subunit into a groove in the N-terminal domain of the following subunit.

The protein localises to the fimbrium. It is found in the cell outer membrane. Tip subunit of the minor fimbriae. These filamentous pili are attached to the cell surface; they mediate biofilm formation, adhesion onto host cells and onto other bacteria that are part of the oral microbiome. They play an important role in invasion of periodontal tissues and are recognized as major virulence factors. This is Minor fimbrium tip subunit MfA4 from Porphyromonas gingivalis (strain ATCC 33277 / DSM 20709 / CIP 103683 / JCM 12257 / NCTC 11834 / 2561).